Reading from the N-terminus, the 393-residue chain is Squamosa promoter-binding-like protein 11 (393 aa).

Positions 74 to 96 (QSTSINSSSPEAKRCKLASESSP) are disordered. An SBP-type zinc finger spans residues 172 to 249 (VPRCQIDGCE…SHHNARRRKP (78 aa)). The Zn(2+) site is built by cysteine 175, cysteine 180, cysteine 197, histidine 200, cysteine 216, cysteine 219, histidine 223, and cysteine 235. A Bipartite nuclear localization signal motif is present at residues 232–248 (KRSCRKRLSHHNARRRK).

Zn(2+) is required as a cofactor.

It is found in the nucleus. Trans-acting factor that binds specifically to the consensus nucleotide sequence 5'-TNCGTACAA-3'. The polypeptide is Squamosa promoter-binding-like protein 11 (SPL11) (Arabidopsis thaliana (Mouse-ear cress)).